Reading from the N-terminus, the 119-residue chain is MCPECFFLMLCFCGYCSSSSSSFRSSPVYGFPGRPPGGAGCRERSQRSCLRPGGLPSLTQNPRLAATVPVAPPLSRRGLRSWHPGKTTPGCKAQRRFAHALSVVAAGPCSLPAGCHTPV.

The N-terminal stretch at 1–30 (MCPECFFLMLCFCGYCSSSSSSFRSSPVYG) is a signal peptide.

This is an uncharacterized protein from Escherichia coli (strain UTI89 / UPEC).